Reading from the N-terminus, the 103-residue chain is Histone H4 (103 aa).

Positions methionine 1–glycine 14 are enriched in gly residues. Residues methionine 1 to arginine 20 are disordered. A DNA-binding region spans residues lysine 17–lysine 21.

The protein belongs to the histone H4 family. The nucleosome is a histone octamer containing two molecules each of H2A, H2B, H3 and H4 assembled in one H3-H4 heterotetramer and two H2A-H2B heterodimers. The octamer wraps approximately 147 bp of DNA.

The protein localises to the nucleus. The protein resides in the chromosome. Its function is as follows. Core component of nucleosome. Nucleosomes wrap and compact DNA into chromatin, limiting DNA accessibility to the cellular machineries which require DNA as a template. Histones thereby play a central role in transcription regulation, DNA repair, DNA replication and chromosomal stability. DNA accessibility is regulated via a complex set of post-translational modifications of histones, also called histone code, and nucleosome remodeling. In Eimeria tenella (Coccidian parasite), this protein is Histone H4.